We begin with the raw amino-acid sequence, 367 residues long: Glutamate 5-kinase (367 aa).

Residue lysine 8 participates in ATP binding. Substrate-binding residues include serine 49, aspartate 136, and asparagine 148. ATP contacts are provided by residues threonine 168–aspartate 169 and threonine 210–lysine 216. The 79-residue stretch at alanine 275–alanine 353 folds into the PUA domain.

Belongs to the glutamate 5-kinase family.

The protein localises to the cytoplasm. It catalyses the reaction L-glutamate + ATP = L-glutamyl 5-phosphate + ADP. It functions in the pathway amino-acid biosynthesis; L-proline biosynthesis; L-glutamate 5-semialdehyde from L-glutamate: step 1/2. Functionally, catalyzes the transfer of a phosphate group to glutamate to form L-glutamate 5-phosphate. The chain is Glutamate 5-kinase from Nostoc punctiforme (strain ATCC 29133 / PCC 73102).